The primary structure comprises 211 residues: FMN-dependent NADH:quinone oxidoreductase 2 (211 aa).

FMN-binding positions include S10 and S17 to S19.

It belongs to the azoreductase type 1 family. In terms of assembly, homodimer. The cofactor is FMN.

It carries out the reaction 2 a quinone + NADH + H(+) = 2 a 1,4-benzosemiquinone + NAD(+). The enzyme catalyses N,N-dimethyl-1,4-phenylenediamine + anthranilate + 2 NAD(+) = 2-(4-dimethylaminophenyl)diazenylbenzoate + 2 NADH + 2 H(+). In terms of biological role, quinone reductase that provides resistance to thiol-specific stress caused by electrophilic quinones. Functionally, also exhibits azoreductase activity. Catalyzes the reductive cleavage of the azo bond in aromatic azo compounds to the corresponding amines. This chain is FMN-dependent NADH:quinone oxidoreductase 2, found in Listeria monocytogenes serovar 1/2a (strain ATCC BAA-679 / EGD-e).